The primary structure comprises 235 residues: LexA repressor (235 aa).

The H-T-H motif DNA-binding region spans 26 to 46 (FDEMKEALDLASKSGIHRLIT). The disordered stretch occupies residues 72-104 (QATTAAPPKGRGAFRPQVLEGGGQAPTTSAQPQ). Active-site for autocatalytic cleavage activity residues include serine 156 and lysine 193.

Belongs to the peptidase S24 family. As to quaternary structure, homodimer.

It catalyses the reaction Hydrolysis of Ala-|-Gly bond in repressor LexA.. Represses a number of genes involved in the response to DNA damage (SOS response), including recA and lexA. In the presence of single-stranded DNA, RecA interacts with LexA causing an autocatalytic cleavage which disrupts the DNA-binding part of LexA, leading to derepression of the SOS regulon and eventually DNA repair. The chain is LexA repressor from Caulobacter sp. (strain K31).